The chain runs to 295 residues: Movement protein BC1 (295 aa).

Belongs to the begomovirus movement protein BC1 family. As to quaternary structure, binds to dimeric supercoiled plasmid DNA. Post-translationally, phosphorylated.

Its subcellular location is the host cell membrane. It is found in the host microsome membrane. The protein localises to the host endoplasmic reticulum membrane. Its function is as follows. Transports viral genome to neighboring plant cells directly through plasmosdesmata, without any budding. The movement protein allows efficient cell to cell propagation, by bypassing the host cell wall barrier. Begomovirus genome is shuttled out of nucleus by Nuclear shuttle protein (NSP) and the movement protein transports the DNA-NSP complex to cell plasmodesmata and facilitates further movement across the cell wall. This Brassica oleracea (Wild cabbage) protein is Movement protein BC1.